A 274-amino-acid chain; its full sequence is Sulfur carrier protein FdhD (274 aa).

Cys-121 acts as the Cysteine persulfide intermediate in catalysis. A Mo-bis(molybdopterin guanine dinucleotide)-binding site is contributed by Phe-258–Arg-263.

Belongs to the FdhD family.

Its subcellular location is the cytoplasm. In terms of biological role, required for formate dehydrogenase (FDH) activity. Acts as a sulfur carrier protein that transfers sulfur from IscS to the molybdenum cofactor prior to its insertion into FDH. This is Sulfur carrier protein FdhD from Yersinia pseudotuberculosis serotype O:3 (strain YPIII).